Here is a 193-residue protein sequence, read N- to C-terminus: Ion-translocating oxidoreductase complex subunit A (193 aa).

The next 6 membrane-spanning stretches (helical) occupy residues 5–25 (ILLI…FLGL), 39–59 (IGMG…AYLV), 65–85 (IPLE…AVIV), 102–122 (LLGI…VALL), 134–154 (VLYG…FAAL), and 171–191 (SIAL…TGLV).

The protein belongs to the NqrDE/RnfAE family. In terms of assembly, the complex is composed of six subunits: RnfA, RnfB, RnfC, RnfD, RnfE and RnfG.

The protein localises to the cell inner membrane. Part of a membrane-bound complex that couples electron transfer with translocation of ions across the membrane. In Actinobacillus pleuropneumoniae serotype 5b (strain L20), this protein is Ion-translocating oxidoreductase complex subunit A.